Consider the following 312-residue polypeptide: Olfactory receptor 4L1 (312 aa).

Residues 1–25 are Extracellular-facing; it reads MDLKNGSLVTEFILLGFFGRWELQI. Asparagine 5 is a glycosylation site (N-linked (GlcNAc...) asparagine). The helical transmembrane segment at 26–49 threads the bilayer; the sequence is FFFVTFSLIYGATVMGNILIMVTV. The Cytoplasmic segment spans residues 50–57; the sequence is TCRSTLHS. The helical transmembrane segment at 58–79 threads the bilayer; that stretch reads PLYFLLGNLSFLDMCLSTATTP. Residues 80 to 100 lie on the Extracellular side of the membrane; that stretch reads KMIIDLLTDHKTISVWGCVTQ. A disulfide bond links cysteine 97 and cysteine 189. Residues 101–120 traverse the membrane as a helical segment; sequence MFFMHFFGGAEMTLLIIMAF. Over 121–139 the chain is Cytoplasmic; it reads DRYVAICKPLHYRTIMSHK. A helical membrane pass occupies residues 140-158; that stretch reads LLKGFAILSWIIGFLHSIS. Over 159–195 the chain is Extracellular; it reads QIVLTMNLPFCGHNVINNIFCDLPLVIKLACIETYTL. Residues 196–219 form a helical membrane-spanning segment; that stretch reads ELFVIADSGLLSFTCFILLLVSYI. Topologically, residues 220–235 are cytoplasmic; sequence VILVSVPKKSSHGLSK. The chain crosses the membrane as a helical span at residues 236-258; the sequence is ALSTLSAHIIVVTLFFGPCIFIY. Over 259–269 the chain is Extracellular; it reads VWPFSSLASNK. A glycan (N-linked (GlcNAc...) asparagine) is linked at asparagine 268. Residues 270–289 traverse the membrane as a helical segment; sequence TLAVFYTVITPLLNPSIYTL. The Cytoplasmic portion of the chain corresponds to 290–312; the sequence is RNKKMQEAIRKLRFQYVSSAQNF.

This sequence belongs to the G-protein coupled receptor 1 family.

Its subcellular location is the cell membrane. In terms of biological role, odorant receptor. The polypeptide is Olfactory receptor 4L1 (OR4L1) (Homo sapiens (Human)).